Consider the following 88-residue polypeptide: Stannin (88 aa).

The Mitochondrial intermembrane portion of the chain corresponds to methionine 1–threonine 10. Residues glycine 11–glycine 31 form a helical membrane-spanning segment. Residues cysteine 32–glycine 88 lie on the Cytoplasmic side of the membrane. Residues serine 49 and serine 83 each carry the phosphoserine modification.

It belongs to the stannin family. As to quaternary structure, monomer.

The protein localises to the mitochondrion outer membrane. Functionally, plays a role in the toxic effects of organotins. Plays a role in endosomal maturation. This chain is Stannin (Snn), found in Mus musculus (Mouse).